We begin with the raw amino-acid sequence, 279 residues long: NAD-dependent protein deacylase (279 aa).

The 253-residue stretch at 20-272 (RERLRQRIFF…PEFVEKLLKG (253 aa)) folds into the Deacetylase sirtuin-type domain. 48 to 67 (GAGISAESGIRTFRAADGLW) contacts NAD(+). Residues Tyr92 and Arg95 each coordinate substrate. 129–132 (QNID) lines the NAD(+) pocket. His147 (proton acceptor) is an active-site residue. Zn(2+) is bound by residues Cys155 and Cys174. Residues 214 to 216 (GTS), 240 to 242 (NLE), and Ala258 contribute to the NAD(+) site.

This sequence belongs to the sirtuin family. Class III subfamily. In terms of assembly, forms a 1:1 complex with acetyl-CoA synthetase (Acs). It depends on Zn(2+) as a cofactor.

Its subcellular location is the cytoplasm. It catalyses the reaction N(6)-acetyl-L-lysyl-[protein] + NAD(+) + H2O = 2''-O-acetyl-ADP-D-ribose + nicotinamide + L-lysyl-[protein]. It carries out the reaction N(6)-succinyl-L-lysyl-[protein] + NAD(+) + H2O = 2''-O-succinyl-ADP-D-ribose + nicotinamide + L-lysyl-[protein]. The enzyme catalyses N(6)-(2-hydroxyisobutanoyl)-L-lysyl-[protein] + NAD(+) + H2O = 2''-O-(2-hydroxyisobutanoyl)-ADP-D-ribose + nicotinamide + L-lysyl-[protein]. With respect to regulation, deacetylation is inhibited by nicotinamide. Its function is as follows. NAD-dependent lysine deacetylase that specifically removes acetyl groups on target proteins. Also acts as a protein-lysine deacylase by mediating protein desuccinylation and de-2-hydroxyisobutyrylation. Modulates the activities of several proteins which are inactive in their acylated form. Activates the enzyme acetyl-CoA synthetase (acs) by deacetylating 'Lys-609' in the inactive, acetylated form of the enzyme. May also modulate the activity of other propionyl-adenosine monophosphate (AMP)-forming enzymes. This is NAD-dependent protein deacylase from Escherichia coli (strain K12).